The chain runs to 629 residues: 1-deoxy-D-xylulose-5-phosphate synthase (629 aa).

Thiamine diphosphate-binding positions include histidine 85 and 126–128; that span reads GHS. Position 157 (aspartate 157) interacts with Mg(2+). Residues 158-159, asparagine 186, tyrosine 293, and glutamate 373 each bind thiamine diphosphate; that span reads GS. Asparagine 186 provides a ligand contact to Mg(2+).

This sequence belongs to the transketolase family. DXPS subfamily. As to quaternary structure, homodimer. Mg(2+) is required as a cofactor. The cofactor is thiamine diphosphate.

The enzyme catalyses D-glyceraldehyde 3-phosphate + pyruvate + H(+) = 1-deoxy-D-xylulose 5-phosphate + CO2. The protein operates within metabolic intermediate biosynthesis; 1-deoxy-D-xylulose 5-phosphate biosynthesis; 1-deoxy-D-xylulose 5-phosphate from D-glyceraldehyde 3-phosphate and pyruvate: step 1/1. In terms of biological role, catalyzes the acyloin condensation reaction between C atoms 2 and 3 of pyruvate and glyceraldehyde 3-phosphate to yield 1-deoxy-D-xylulose-5-phosphate (DXP). This Helicobacter hepaticus (strain ATCC 51449 / 3B1) protein is 1-deoxy-D-xylulose-5-phosphate synthase.